A 359-amino-acid polypeptide reads, in one-letter code: Non-functional pseudokinase ZRK2 (359 aa).

Positions 1–10 are enriched in basic residues; it reads MKSMVKKLKQ. Residues 1–20 form a disordered region; sequence MKSMVKKLKQSLRSGSLEKR. Residues 64–356 enclose the Protein kinase domain; that stretch reads LKATSNFGSS…KELKQIETLF (293 aa). ATP is bound by residues 70–78 and Lys-97; that span reads FGSSCFVTA.

It belongs to the protein kinase superfamily. Ser/Thr protein kinase family. ZRK subfamily.

The polypeptide is Non-functional pseudokinase ZRK2 (Arabidopsis thaliana (Mouse-ear cress)).